The primary structure comprises 377 residues: Circumsporozoite protein (377 aa).

An N-terminal signal peptide occupies residues 1-22; sequence MKNFILLAVSSILLVDLFPTHC. Residues 51 to 294 form a disordered region; it reads HVGQSASRGR…NNEGANAPNE (244 aa). A compositionally biased stretch (basic and acidic residues) spans 72 to 100; sequence DAKKKKDGKKAEPKNPRENKLKQPGDRAD. The interval 80 to 88 is required for the binding to heparan sulfate proteoglycans (HSPGs) on the surface of host hepatocytes; the sequence is KKAEPKNPR. Residues 91 to 95 are region I; contains the proteolytic cleavage site; that stretch reads KLKQP. 20 tandem repeats follow at residues 95 to 103, 104 to 112, 113 to 121, 122 to 130, 131 to 139, 140 to 148, 149 to 157, 158 to 166, 167 to 175, 176 to 184, 185 to 193, 194 to 202, 203 to 211, 212 to 220, 221 to 229, 230 to 238, 239 to 247, 248 to 256, 257 to 265, and 266 to 274. Positions 95 to 274 are 20 X 9 AA tandem repeats of [PA]-G-D-R-A-[DA]-G-Q-[PA]; it reads PGDRADGQPA…AAGDRAAGQA (180 aa). Residues 236–273 show a composition bias toward low complexity; sequence GQPAGDRAAGQPAGDRAAGQPAGDRAAGQAAGDRAAGQ. A compositionally biased stretch (gly residues) spans 274–283; the sequence is AAGGNAGGQG. A compositionally biased stretch (low complexity) spans 284–293; that stretch reads QNNEGANAPN. Positions 303–355 constitute a TSP type-1 domain; the sequence is KVRATVGTEWTPCSVTCGVGVRVRRRVNAANKKPEDLTLNDLETDVCTMDKCA. Disulfide bonds link cysteine 315/cysteine 349 and cysteine 319/cysteine 354. An O-linked (Fuc) threonine glycan is attached at threonine 318. Cysteine 354 carries GPI-anchor amidated cysteine lipidation. Positions 355 to 377 are cleaved as a propeptide — removed in mature form; sequence AGIFNVVSNSLGLVILLVLALFN.

It belongs to the plasmodium circumsporozoite protein family. In terms of processing, during host cell invasion, proteolytically cleaved at the cell membrane in the region I by a papain-like cysteine protease of parasite origin. Cleavage is triggered by the sporozoite contact with highly sulfated heparan sulfate proteoglycans (HSPGs) present on the host hepatocyte cell surface. Cleavage exposes the TSP type-1 (TSR) domain and is required for productive invasion of host hepatocytes but not for adhesion to the host cell membrane. Cleavage is dispensable for sporozoite development in the oocyst, motility and for traversal of host and vector cells. O-glycosylated; maybe by POFUT2.

It localises to the cell membrane. The protein localises to the cytoplasm. Functionally, essential sporozoite protein. In the mosquito vector, required for sporozoite development in the oocyst, migration through the vector hemolymph and entry into the vector salivary glands. In the vertebrate host, required for sporozoite migration through the host dermis and infection of host hepatocytes. Binds to highly sulfated heparan sulfate proteoglycans (HSPGs) on the surface of host hepatocytes. Its function is as follows. In the vertebrate host, binds to highly sulfated heparan sulfate proteoglycans (HSPGs) on the surface of host hepatocytes and is required for sporozoite invasion of the host hepatocytes. The polypeptide is Circumsporozoite protein (Plasmodium vivax (strain Salvador I)).